A 184-amino-acid polypeptide reads, in one-letter code: Protein OPG161 (184 aa).

Over M1–I33 the chain is Intravirion. Residues G34 to I56 traverse the membrane as a helical segment. The Virion surface segment spans residues V57–N184. A C-type lectin-like domain region spans residues S98–N184. An N-linked (GlcNAc...) asparagine; by host glycan is attached at N134.

The protein belongs to the orthopoxvirus OPG161 family. In terms of assembly, homodimer, disulfide-linked. Interacts with protein OPG190. Interacts (via C-terminus) with protein OPG164. Interacts with OPG162.

The protein resides in the virion membrane. The protein localises to the host membrane. Its function is as follows. Forms a complex with OPG162 and OPG190 to coordinate the incorporation of OPG164 into wrapped enveloped virion (EV) membranes and, subsequently, the production of actin tails. Therefore plays an essential role in efficient cell-to-cell spread of viral particles. In Homo sapiens (Human), this protein is Protein OPG161 (OPG161).